Consider the following 292-residue polypeptide: Homoserine kinase (292 aa).

84-94 (PISRGLGSSSA) contributes to the ATP binding site.

This sequence belongs to the GHMP kinase family. Homoserine kinase subfamily.

Its subcellular location is the cytoplasm. It carries out the reaction L-homoserine + ATP = O-phospho-L-homoserine + ADP + H(+). The protein operates within amino-acid biosynthesis; L-threonine biosynthesis; L-threonine from L-aspartate: step 4/5. In terms of biological role, catalyzes the ATP-dependent phosphorylation of L-homoserine to L-homoserine phosphate. The sequence is that of Homoserine kinase from Sulfurovum sp. (strain NBC37-1).